The sequence spans 72 residues: MGRVKIKVVKRTALELFKRYPDIWTKDFEKNKKLVQALLKKVSKKFRNQIAGYLVRLVKFKEQNKLPIQYLR.

The protein belongs to the eukaryotic ribosomal protein eS17 family.

The polypeptide is Small ribosomal subunit protein eS17 (Nanoarchaeum equitans (strain Kin4-M)).